A 47-amino-acid chain; its full sequence is Delta-actitoxin-Cgg1b (47 aa).

A Hydroxyproline modification is found at proline 3. 3 cysteine pairs are disulfide-bonded: cysteine 4/cysteine 44, cysteine 6/cysteine 34, and cysteine 27/cysteine 45.

This sequence belongs to the sea anemone sodium channel inhibitory toxin family. Type I subfamily.

It localises to the secreted. It is found in the nematocyst. In terms of biological role, binds voltage-dependently at site 3 of sodium channels (Nav) and inhibits the inactivation, thereby blocking neuronal transmission. This Condylactis gigantea (Giant Caribbean anemone) protein is Delta-actitoxin-Cgg1b.